A 521-amino-acid chain; its full sequence is GMP synthase [glutamine-hydrolyzing] (521 aa).

The Glutamine amidotransferase type-1 domain occupies 5–197 (KILILDFGSQ…VLDICGAQPG (193 aa)). Cys-81 acts as the Nucleophile in catalysis. Residues His-171 and Glu-173 contribute to the active site. The GMPS ATP-PPase domain occupies 198–390 (WTMPNYIEEA…LGLPREMVYR (193 aa)). 225–231 (SGGVDSS) contacts ATP.

As to quaternary structure, homodimer.

It catalyses the reaction XMP + L-glutamine + ATP + H2O = GMP + L-glutamate + AMP + diphosphate + 2 H(+). It functions in the pathway purine metabolism; GMP biosynthesis; GMP from XMP (L-Gln route): step 1/1. In terms of biological role, catalyzes the synthesis of GMP from XMP. This is GMP synthase [glutamine-hydrolyzing] from Neisseria meningitidis serogroup C (strain 053442).